The chain runs to 275 residues: Endolytic peptidoglycan transglycosylase RlpA (275 aa).

The signal sequence occupies residues 1–22 (MQIKTITLKLSAVSLGALFFSG). The N-palmitoyl cysteine moiety is linked to residue Cys-23. Residue Cys-23 is the site of S-diacylglycerol cysteine attachment. Residues 200–275 (IYEGGNFMVQ…AFAGAFVVRE (76 aa)) enclose the SPOR domain.

Belongs to the RlpA family.

It is found in the cell membrane. In terms of biological role, lytic transglycosylase with a strong preference for naked glycan strands that lack stem peptides. The chain is Endolytic peptidoglycan transglycosylase RlpA from Campylobacter jejuni subsp. jejuni serotype O:2 (strain ATCC 700819 / NCTC 11168).